The chain runs to 549 residues: E-selectin (549 aa).

Positions 1-21 are cleaved as a signal peptide; it reads MNASCFLSALTFVLLIGKSIA. The 118-residue stretch at 22–139 folds into the C-type lectin domain; sequence WYYNASSELM…CDKKKLALCY (118 aa). Over 22–494 the chain is Extracellular; that stretch reads WYYNASSELM…CEAPANPPRP (473 aa). Asparagine 25 and asparagine 60 each carry an N-linked (GlcNAc...) asparagine glycan. Disulfide bonds link cysteine 40-cysteine 138, cysteine 111-cysteine 130, cysteine 143-cysteine 154, cysteine 148-cysteine 163, cysteine 165-cysteine 174, cysteine 180-cysteine 225, cysteine 193-cysteine 206, cysteine 210-cysteine 238, cysteine 243-cysteine 287, cysteine 256-cysteine 269, cysteine 273-cysteine 300, cysteine 305-cysteine 350, cysteine 336-cysteine 363, cysteine 368-cysteine 413, cysteine 399-cysteine 426, cysteine 431-cysteine 472, and cysteine 458-cysteine 485. Ca(2+)-binding residues include glutamate 101, asparagine 103, and glutamate 109. Residues 101–109, 113–118, and 126–128 contribute to the a carbohydrate site; these read EPNNKQRNE, EIYIQR, and NDE. Ca(2+) is bound by residues asparagine 126 and aspartate 127. An EGF-like domain is found at 140 to 175; sequence TASCTNTSCSGHGECVETINSYTCKCHPGFLGPKCD. Asparagine 145 is a glycosylation site (N-linked (GlcNAc...) asparagine). Sushi domains are found at residues 178 to 240, 241 to 302, 303 to 365, 366 to 428, and 429 to 487; these read VTCQ…ACHV, VECK…SCKA, VTCD…VCKA, SQCE…TCAG, and VQCS…TCEA. N-linked (GlcNAc...) asparagine glycans are attached at residues asparagine 192 and asparagine 203. Asparagine 266 carries N-linked (GlcNAc...) asparagine glycosylation. N-linked (GlcNAc...) asparagine glycans are attached at residues asparagine 313, asparagine 320, and asparagine 333. Residues asparagine 441 and asparagine 465 are each glycosylated (N-linked (GlcNAc...) asparagine). The chain crosses the membrane as a helical span at residues 495–516; it reads LVVALSVAATSLLTLSSLIYVL. Residues 517–549 lie on the Cytoplasmic side of the membrane; it reads KRFFWKKAKKFVPASSCQSLQSFENYQGPSYII.

It belongs to the selectin/LECAM family. Interacts with SELPLG/PSGL1 and PODXL2 through the sialyl Lewis X epitope. SELPLG sulfation appears not to be required for this interaction.

It localises to the cell membrane. Functionally, cell-surface glycoprotein having a role in immunoadhesion. Mediates in the adhesion of blood neutrophils in cytokine-activated endothelium through interaction with SELPLG/PSGL1. May have a role in capillary morphogenesis. The sequence is that of E-selectin (Sele) from Rattus norvegicus (Rat).